We begin with the raw amino-acid sequence, 620 residues long: UvrABC system protein C (620 aa).

The GIY-YIG domain occupies 13–92; sequence DKPGVYIMKN…IKKYSPRYNI (80 aa). Residues 204-239 form the UVR domain; the sequence is TSIIKKLKLEMEKAAEELEFEKAAKIRDRILAIELI.

It belongs to the UvrC family. In terms of assembly, interacts with UvrB in an incision complex.

It is found in the cytoplasm. In terms of biological role, the UvrABC repair system catalyzes the recognition and processing of DNA lesions. UvrC both incises the 5' and 3' sides of the lesion. The N-terminal half is responsible for the 3' incision and the C-terminal half is responsible for the 5' incision. The chain is UvrABC system protein C from Clostridium perfringens (strain ATCC 13124 / DSM 756 / JCM 1290 / NCIMB 6125 / NCTC 8237 / Type A).